The chain runs to 849 residues: Disks large homolog 3 (849 aa).

The interval 32–101 is disordered; sequence DWQVPDPYGP…GKNTPKLNGS (70 aa). A compositionally biased stretch (gly residues) spans 41-53; it reads PSGGNGASSGYGG. The span at 57-69 shows a compositional bias: polar residues; that stretch reads QTLPSQAGATPTP. 3 consecutive PDZ domains span residues 149-235, 244-330, and 404-484; these read EIVL…VRRR, EVNL…VAKP, and KIIL…AQYR. Position 157 is a phosphoserine (Ser157). The region spanning 519-589 is the SH3 domain; it reads KRSLYVRALF…PSKKRVEKKE (71 aa). The 176-residue stretch at 659–834 folds into the Guanylate kinase-like domain; sequence ARPVIILGPM…IYNKIKQIIE (176 aa). Tyr705 carries the phosphotyrosine modification.

It belongs to the MAGUK family. As to quaternary structure, interacts through its PDZ domains with NETO1 and APC. Interacts through its first two PDZ domains with ERBB4. Interacts through its third PDZ domain with NLGN1, and probably with NLGN2 and NLGN3. Interacts through its PDZ domains with GRIN2B and SYNGAP1. Interacts through its guanylate kinase-like domain with DLGAP1, DLGAP2, DLGAP3 and DLGAP4. Interacts with FRMPD4 (via C-terminus). Interacts with LRFN2. Interacts with LRFN1 and LRFN4. Interacts with FLTP. Interacts with DGKI (via PDZ-binding motif).

Functionally, required for learning most likely through its role in synaptic plasticity following NMDA receptor signaling. In Rattus norvegicus (Rat), this protein is Disks large homolog 3 (Dlg3).